A 656-amino-acid polypeptide reads, in one-letter code: Receptor-type tyrosine-protein phosphatase R (656 aa).

Positions 1-23 (MRRAVGFPALCLLLNLHAAGCFS) are cleaved as a signal peptide. An O-linked (Xyl...) (chondroitin sulfate) serine glycan is attached at S23. Topologically, residues 24–226 (RNNDHFLAIR…EADKIWSKEG (203 aa)) are extracellular. N-linked (GlcNAc...) asparagine glycosylation occurs at N128. Residues 227 to 247 (FYAVVIFLSIFIIIVTCLMII) traverse the membrane as a helical segment. Residues 248–656 (YRLKERLQLS…ESRLSPETVE (409 aa)) are Cytoplasmic-facing. The interval 269–289 (HLSPIARQQAQSEAKTTHSMV) is disordered. S271 carries the post-translational modification Phosphoserine. The segment covering 274 to 289 (ARQQAQSEAKTTHSMV) has biased composition (polar residues). Phosphoserine; by PKA is present on S338. The Tyrosine-protein phosphatase domain maps to 392–646 (LQSEFMEIPM…EFVHHALCLF (255 aa)). Substrate-binding positions include D553, 587–593 (CSAGIGR), and Q631. C587 functions as the Phosphocysteine intermediate in the catalytic mechanism.

The protein belongs to the protein-tyrosine phosphatase family. Receptor class 7 subfamily. Interacts with MAPKs. Expressed in the heart, brain, spleen, lung, liver, skeletal muscle, kidney and testis. Isoform alpha is expressed throughout the granular layer of the cerebellar but not within the Purkinje cells, also in the villi of the ileum and jejunum and both the villi and crypts of the duodenum. Isoform beta is expressed only in the Purkinje cells. Isoform gamma is expressed throughout the brain, the villi and crypts of the duodenum, jejunum and ileum and expressed at low levels in the proximal colon.

It is found in the cell membrane. The protein localises to the cytoplasm. The catalysed reaction is O-phospho-L-tyrosyl-[protein] + H2O = L-tyrosyl-[protein] + phosphate. Sequesters mitogen-activated protein kinases (MAPKs) such as MAPK1, MAPK3 and MAPK14 in the cytoplasm in an inactive form. The MAPKs bind to a dephosphorylated kinase interacting motif, phosphorylation of which by the protein kinase A complex releases the MAPKs for activation and translocation into the nucleus. Isoform gamma may have a role in patterning and cellular proliferation of skeletal elements in the precartilaginous/cartilaginous skeleton. This chain is Receptor-type tyrosine-protein phosphatase R (Ptprr), found in Mus musculus (Mouse).